Consider the following 111-residue polypeptide: Putative FAD-linked sulfhydryl oxidase 347L (111 aa).

Residues threonine 2 to tryptophan 109 form the ERV/ALR sulfhydryl oxidase domain. Cysteine 49 and cysteine 52 form a disulfide bridge.

It belongs to the IIV-6 347L family. Requires FAD as cofactor.

The enzyme catalyses 2 R'C(R)SH + O2 = R'C(R)S-S(R)CR' + H2O2. Functionally, FAD-dependent sulfhydryl oxidase that catalyzes disulfide bond formation. In Invertebrate iridescent virus 6 (IIV-6), this protein is Putative FAD-linked sulfhydryl oxidase 347L.